The following is a 468-amino-acid chain: PE family protein PE3 (468 aa).

The PE domain maps to 1 to 92 (MSYVIAAPEM…AGAAYAQAEA (92 aa)). Residues 154–375 (PVAQYTPEQW…DLRVLVDLGY (222 aa)) enclose the PE-PPE domain.

Belongs to the mycobacterial PE family.

The protein resides in the secreted. Its subcellular location is the cell wall. Its function is as follows. Plays significant roles in mycobacterial persistence during infection and modulates host immune response. The chain is PE family protein PE3 from Mycobacterium tuberculosis (strain ATCC 25618 / H37Rv).